Consider the following 182-residue polypeptide: Ribosome-recycling factor (182 aa).

This sequence belongs to the RRF family.

It is found in the cytoplasm. In terms of biological role, responsible for the release of ribosomes from messenger RNA at the termination of protein biosynthesis. May increase the efficiency of translation by recycling ribosomes from one round of translation to another. This is Ribosome-recycling factor from Nostoc sp. (strain PCC 7120 / SAG 25.82 / UTEX 2576).